Here is a 222-residue protein sequence, read N- to C-terminus: Superoxide dismutase [Mn], mitochondrial (222 aa).

The N-terminal 24 residues, 1–24, are a transit peptide targeting the mitochondrion; that stretch reads MLCRAACSTSRKLVPALGSLGSRQ. H50 contributes to the Mn(2+) binding site. A 3'-nitrotyrosine modification is found at Y58. K68 and K75 each carry N6-acetyllysine; alternate. An N6-succinyllysine; alternate mark is found at K68 and K75. A Mn(2+)-binding site is contributed by H98. K114 is modified (N6-acetyllysine). N6-acetyllysine; alternate is present on residues K122 and K130. Residues K122 and K130 each carry the N6-succinyllysine; alternate modification. 2 residues coordinate Mn(2+): D183 and H187. K202 bears the N6-acetyllysine mark.

Belongs to the iron/manganese superoxide dismutase family. In terms of assembly, homotetramer. Mn(2+) is required as a cofactor. In terms of processing, nitrated under oxidative stress. Nitration coupled with oxidation inhibits the catalytic activity. Post-translationally, acetylation at Lys-122 decreases enzymatic activity. Deacetylated by SIRT3 upon exposure to ionizing radiations or after long fasting. Polyubiquitinated; leading to proteasomal degradation. Deubiquitinated by USP36 which increases protein stability.

Its subcellular location is the mitochondrion matrix. It catalyses the reaction 2 superoxide + 2 H(+) = H2O2 + O2. Functionally, destroys superoxide anion radicals which are normally produced within the cells and which are toxic to biological systems. The sequence is that of Superoxide dismutase [Mn], mitochondrial (SOD2) from Equus caballus (Horse).